Reading from the N-terminus, the 514-residue chain is Zinc finger and BTB domain-containing protein 2 (514 aa).

The 66-residue stretch at 24-89 (CDCTVAIGDV…MYTGKMAPQL (66 aa)) folds into the BTB domain. Residues Lys-147 and Lys-154 each participate in a glycyl lysine isopeptide (Lys-Gly) (interchain with G-Cter in SUMO2) cross-link. The segment at 149–231 (ASAPEKLGRD…LEASSSDEQP (83 aa)) is disordered. Composition is skewed to polar residues over residues 161–200 (PQTS…PLQT) and 222–231 (LEASSSDEQP). A C2H2-type 1 zinc finger spans residues 254–276 (YACHLCGRRFTLRSSLREHLQIH). Ser-341 carries the phosphoserine modification. Residue Lys-362 forms a Glycyl lysine isopeptide (Lys-Gly) (interchain with G-Cter in SUMO2) linkage. The C2H2-type 2 zinc finger occupies 363–385 (YECTICGRKFIQKSHWREHMYIH). Residues 390 to 410 (FKCSTCDKSFCRANQAARHVC) form a C2H2-type 3; atypical zinc finger. Residues 448–468 (YKCNLCDKTFSTPNEVVKHSC) form a C2H2-type 4; atypical zinc finger. Glycyl lysine isopeptide (Lys-Gly) (interchain with G-Cter in SUMO2) cross-links involve residues Lys-465, Lys-505, and Lys-506.

Its subcellular location is the nucleus. May be involved in transcriptional regulation. The sequence is that of Zinc finger and BTB domain-containing protein 2 (ZBTB2) from Homo sapiens (Human).